The following is a 114-amino-acid chain: Large ribosomal subunit protein P1 (114 aa).

A disordered region spans residues 55–114; it reads EEAAAAPAAAPAASGSDDEAAADDGDDDEEADADEAAEAEDAGDDDDEEPSGEGLGDLFG. Over residues 56–69 the composition is skewed to low complexity; it reads EAAAAPAAAPAASG. The segment covering 70 to 105 has biased composition (acidic residues); it reads SDDEAAADDGDDDEEADADEAAEAEDAGDDDDEEPS.

This sequence belongs to the eukaryotic ribosomal protein P1/P2 family. In terms of assembly, part of the 50S ribosomal subunit. Homodimer, it forms part of the ribosomal stalk which helps the ribosome interact with GTP-bound translation factors. Forms a heptameric uL10/P0(P1)2(P1)2(P1)2 complex, where uL10/P0 forms an elongated spine to which the P1 dimers bind in a sequential fashion.

Its function is as follows. Forms part of the ribosomal stalk, playing a central role in the interaction of the ribosome with GTP-bound translation factors. This is Large ribosomal subunit protein P1 from Halobacterium salinarum (strain ATCC 700922 / JCM 11081 / NRC-1) (Halobacterium halobium).